An 84-amino-acid polypeptide reads, in one-letter code: uncharacterized protein (84 aa).

This is an uncharacterized protein from Schizosaccharomyces pombe (strain 972 / ATCC 24843) (Fission yeast).